The sequence spans 490 residues: MQDIKIKSETGWKLDNTYADLPKTLFSKQNPTPVKAPKLVVLNQPLAESLGLKAEFLHDSDNVAIFAGNKIEEGSLPIAQAYAGHQFGYFNMLGDGRAILLGEQITPSGEKIDIQLKGSGRTPYSRGGDGRAALGPMLREYIISEAMQGLEIPTTRSLAVVTTGEPVIRENVLSGAILTRVASSHIRVATFQYAAKWGTIEELKALADYTIKRHFSDIDNLENPYIFLLQEVIKRQASLISKWQLVGFIHGVMNTDNMAISGETIDYGPCAFMDTYDLETVFSSIDREGRYSYGNQPPIAEWNLARFAETLLPLLHNNHEKSVEIAQNELSKFADLYHDNWLRGMISKLGIFNKESQDEALIENLLSIMYKYKADYTNTFSALTLDKYSDMELFKSKEFDKWHELWNARLNRQKESKESSNMLMKNSNPYVIPRNYRVEEALAAAEEGDYTVMNKLLHVLCNPYAYSDNQSEYEKLPQKSCGSYRTYCGT.

Residues glycine 94, glycine 96, arginine 97, lysine 117, aspartate 129, glycine 130, arginine 180, and arginine 187 each coordinate ATP. Aspartate 256 functions as the Proton acceptor in the catalytic mechanism. 2 residues coordinate Mg(2+): asparagine 257 and aspartate 266. An ATP-binding site is contributed by aspartate 266.

It belongs to the SELO family. Mg(2+) is required as a cofactor. It depends on Mn(2+) as a cofactor.

The enzyme catalyses L-seryl-[protein] + ATP = 3-O-(5'-adenylyl)-L-seryl-[protein] + diphosphate. The catalysed reaction is L-threonyl-[protein] + ATP = 3-O-(5'-adenylyl)-L-threonyl-[protein] + diphosphate. It carries out the reaction L-tyrosyl-[protein] + ATP = O-(5'-adenylyl)-L-tyrosyl-[protein] + diphosphate. It catalyses the reaction L-histidyl-[protein] + UTP = N(tele)-(5'-uridylyl)-L-histidyl-[protein] + diphosphate. The enzyme catalyses L-seryl-[protein] + UTP = O-(5'-uridylyl)-L-seryl-[protein] + diphosphate. The catalysed reaction is L-tyrosyl-[protein] + UTP = O-(5'-uridylyl)-L-tyrosyl-[protein] + diphosphate. Its function is as follows. Nucleotidyltransferase involved in the post-translational modification of proteins. It can catalyze the addition of adenosine monophosphate (AMP) or uridine monophosphate (UMP) to a protein, resulting in modifications known as AMPylation and UMPylation. In Clostridium beijerinckii (strain ATCC 51743 / NCIMB 8052) (Clostridium acetobutylicum), this protein is Protein nucleotidyltransferase YdiU.